The chain runs to 62 residues: Large ribosomal subunit protein uL30 (62 aa).

It belongs to the universal ribosomal protein uL30 family. In terms of assembly, part of the 50S ribosomal subunit.

The protein is Large ribosomal subunit protein uL30 of Hydrogenovibrio crunogenus (strain DSM 25203 / XCL-2) (Thiomicrospira crunogena).